A 146-amino-acid polypeptide reads, in one-letter code: MSSEVEPPQKKKQPWLPDYIVENCLAHISRSYYPKLSLVSSPFALSSYPKSSTKRDIASTTEEYFFHVCLQLPKSPLPTWYTLWIKPDQIEKKKKINTFTGNTRLVQIPSSYHYPFDQVFIFNLYGAMRSSKAMVRPPSYGLVSMF.

This is an uncharacterized protein from Arabidopsis thaliana (Mouse-ear cress).